Reading from the N-terminus, the 154-residue chain is Protein X (154 aa).

A mitochondrial targeting sequence region spans residues 68–117 (PCALRFTSARCMETTVNAPRNLPTVLHKRTLGLSAMSTTKIETYFKDCVF).

It belongs to the orthohepadnavirus protein X family. May form homodimer. May interact with host CEBPA, CFLAR, CREB1, DDB1, E4F1, HBXIP, HSPD1/HSP60, NFKBIA, POLR2E and SMAD4. Interacts with host SMC5-SMC6 complex and induces its degradation. Interacts with host TRPC4AP; leading to prevent ubiquitination of TRPC4AP. Interacts with host PLSCR1; this interaction promotes ubiquitination and degradation of HBx and impairs HBx-mediated cell proliferation. A fraction may be phosphorylated in insect cells and HepG2 cells, a human hepatoblastoma cell line. Phosphorylated in vitro by host protein kinase C or mitogen-activated protein kinase. N-acetylated in insect cells.

The protein localises to the host cytoplasm. The protein resides in the host nucleus. Its subcellular location is the host mitochondrion. Its function is as follows. Multifunctional protein that plays a role in silencing host antiviral defenses and promoting viral transcription. Does not seem to be essential for HBV infection. May be directly involved in development of cirrhosis and liver cancer (hepatocellular carcinoma). Most of cytosolic activities involve modulation of cytosolic calcium. The effect on apoptosis is controversial depending on the cell types in which the studies have been conducted. May induce apoptosis by localizing in mitochondria and causing loss of mitochondrial membrane potential. May also modulate apoptosis by binding host CFLAR, a key regulator of the death-inducing signaling complex (DISC). Promotes viral transcription by using the host E3 ubiquitin ligase DDB1 to target the SMC5-SMC6 complex to proteasomal degradation. This host complex would otherwise bind to viral episomal DNA, and prevents its transcription. Moderately stimulates transcription of many different viral and cellular transcription elements. Promoters and enhancers stimulated by HBx contain DNA binding sites for NF-kappa-B, AP-1, AP-2, c-EBP, ATF/CREB, or the calcium-activated factor NF-AT. The chain is Protein X from Gorilla gorilla (western gorilla).